The sequence spans 421 residues: 4-hydroxy-3-methylbut-2-en-1-yl diphosphate synthase (flavodoxin) (421 aa).

[4Fe-4S] cluster-binding residues include C311, C314, C357, and E364.

It belongs to the IspG family. [4Fe-4S] cluster is required as a cofactor.

It catalyses the reaction (2E)-4-hydroxy-3-methylbut-2-enyl diphosphate + oxidized [flavodoxin] + H2O + 2 H(+) = 2-C-methyl-D-erythritol 2,4-cyclic diphosphate + reduced [flavodoxin]. It functions in the pathway isoprenoid biosynthesis; isopentenyl diphosphate biosynthesis via DXP pathway; isopentenyl diphosphate from 1-deoxy-D-xylulose 5-phosphate: step 5/6. In terms of biological role, converts 2C-methyl-D-erythritol 2,4-cyclodiphosphate (ME-2,4cPP) into 1-hydroxy-2-methyl-2-(E)-butenyl 4-diphosphate. The chain is 4-hydroxy-3-methylbut-2-en-1-yl diphosphate synthase (flavodoxin) from Stenotrophomonas maltophilia (strain K279a).